We begin with the raw amino-acid sequence, 122 residues long: Large ribosomal subunit protein uL14 (122 aa).

This sequence belongs to the universal ribosomal protein uL14 family. As to quaternary structure, part of the 50S ribosomal subunit. Forms a cluster with proteins L3 and L19. In the 70S ribosome, L14 and L19 interact and together make contacts with the 16S rRNA in bridges B5 and B8.

In terms of biological role, binds to 23S rRNA. Forms part of two intersubunit bridges in the 70S ribosome. This chain is Large ribosomal subunit protein uL14, found in Alteromonas mediterranea (strain DSM 17117 / CIP 110805 / LMG 28347 / Deep ecotype).